A 184-amino-acid polypeptide reads, in one-letter code: dITP/XTP pyrophosphatase (184 aa).

7-12 (TSNPGK) contributes to the substrate binding site. Glutamate 36 and aspartate 65 together coordinate Mg(2+). Residue aspartate 65 is the Proton acceptor of the active site. Residues serine 66, 139-142 (FGFD), lysine 162, and 167-168 (HR) each bind substrate.

This sequence belongs to the HAM1 NTPase family. As to quaternary structure, homodimer. Mg(2+) is required as a cofactor.

It carries out the reaction XTP + H2O = XMP + diphosphate + H(+). The enzyme catalyses dITP + H2O = dIMP + diphosphate + H(+). The catalysed reaction is ITP + H2O = IMP + diphosphate + H(+). Its function is as follows. Pyrophosphatase that catalyzes the hydrolysis of nucleoside triphosphates to their monophosphate derivatives, with a high preference for the non-canonical purine nucleotides XTP (xanthosine triphosphate), dITP (deoxyinosine triphosphate) and ITP. Seems to function as a house-cleaning enzyme that removes non-canonical purine nucleotides from the nucleotide pool, thus preventing their incorporation into DNA/RNA and avoiding chromosomal lesions. This Thermococcus kodakarensis (strain ATCC BAA-918 / JCM 12380 / KOD1) (Pyrococcus kodakaraensis (strain KOD1)) protein is dITP/XTP pyrophosphatase.